An 89-amino-acid polypeptide reads, in one-letter code: Small ribosomal subunit protein uS15 (89 aa).

This sequence belongs to the universal ribosomal protein uS15 family. As to quaternary structure, part of the 30S ribosomal subunit. Forms a bridge to the 50S subunit in the 70S ribosome, contacting the 23S rRNA.

One of the primary rRNA binding proteins, it binds directly to 16S rRNA where it helps nucleate assembly of the platform of the 30S subunit by binding and bridging several RNA helices of the 16S rRNA. In terms of biological role, forms an intersubunit bridge (bridge B4) with the 23S rRNA of the 50S subunit in the ribosome. The protein is Small ribosomal subunit protein uS15 of Nitrosomonas eutropha (strain DSM 101675 / C91 / Nm57).